Reading from the N-terminus, the 128-residue chain is uncharacterized protein (128 aa).

The next 2 helical transmembrane spans lie at 45–65 and 95–115; these read GYFH…LFPF and FMSH…LSCF.

It is found in the membrane. This is an uncharacterized protein from Saccharomyces cerevisiae (strain ATCC 204508 / S288c) (Baker's yeast).